A 151-amino-acid chain; its full sequence is Probable cGMP 3',5'-cyclic phosphodiesterase subunit delta (151 aa).

Belongs to the PDE6D/unc-119 family. Interacts with Pde6.

The protein resides in the nucleus. Its subcellular location is the cytoplasm. This is Probable cGMP 3',5'-cyclic phosphodiesterase subunit delta from Drosophila simulans (Fruit fly).